The following is a 268-amino-acid chain: 1D-myo-inositol 2-acetamido-2-deoxy-alpha-D-glucopyranoside deacetylase (268 aa).

3 residues coordinate Zn(2+): H7, D10, and H142.

This sequence belongs to the MshB deacetylase family. It depends on Zn(2+) as a cofactor.

The enzyme catalyses 1D-myo-inositol 2-acetamido-2-deoxy-alpha-D-glucopyranoside + H2O = 1D-myo-inositol 2-amino-2-deoxy-alpha-D-glucopyranoside + acetate. Functionally, catalyzes the deacetylation of 1D-myo-inositol 2-acetamido-2-deoxy-alpha-D-glucopyranoside (GlcNAc-Ins) in the mycothiol biosynthesis pathway. This Saccharomonospora viridis (strain ATCC 15386 / DSM 43017 / JCM 3036 / CCUG 5913 / NBRC 12207 / NCIMB 9602 / P101) (Thermoactinomyces viridis) protein is 1D-myo-inositol 2-acetamido-2-deoxy-alpha-D-glucopyranoside deacetylase.